A 431-amino-acid polypeptide reads, in one-letter code: Arginine biosynthesis bifunctional protein ArgJ, mitochondrial (431 aa).

Thr174, Lys200, Thr211, Glu297, Asn426, and Thr431 together coordinate substrate. Thr211 (nucleophile) is an active-site residue.

Belongs to the ArgJ family. As to quaternary structure, heterodimer of an alpha and a beta chain. The alpha and beta chains are autoproteolytically processed from a single precursor protein within the mitochondrion.

The protein localises to the mitochondrion matrix. It catalyses the reaction N(2)-acetyl-L-ornithine + L-glutamate = N-acetyl-L-glutamate + L-ornithine. The enzyme catalyses L-glutamate + acetyl-CoA = N-acetyl-L-glutamate + CoA + H(+). Its pathway is amino-acid biosynthesis; L-arginine biosynthesis; L-ornithine and N-acetyl-L-glutamate from L-glutamate and N(2)-acetyl-L-ornithine (cyclic): step 1/1. It participates in amino-acid biosynthesis; L-arginine biosynthesis; N(2)-acetyl-L-ornithine from L-glutamate: step 1/4. Its function is as follows. Catalyzes two activities which are involved in the cyclic version of arginine biosynthesis: the synthesis of acetylglutamate from glutamate and acetyl-CoA, and of ornithine by transacetylation between acetylornithine and glutamate. The chain is Arginine biosynthesis bifunctional protein ArgJ, mitochondrial from Yarrowia lipolytica (strain CLIB 122 / E 150) (Yeast).